The primary structure comprises 318 residues: MIKKRNTTKISVIGAGSVGATTAYALMLSGVATEIVLVDVNKAKTEGEAMDLSHGADFVKPVNILSGDYKDTEGSDIVVITAGAAQKVGETRLQLINKNINIFKSIIPEVVKYNKDAILLVVSNPVDVLSYVTYKLSGFPKERVIGSGTVLDTSRLKHEIGKRYKIDPRNVNTYIMGEHGDSEIATWSVTNIQNIKIDEYANKENLEYNDNFRKEVYENVKNAAYEVINRKGATFYAIALAVTRIVKAILGDEKTILPVSTLVENYYGIKDVYLGMPCIVGGSGIEKALSIDLNKTEASKLVKSAETLKNTLNNASGL.

Residues V18, D39, K44, Y69, and 83-84 (GA) contribute to the NAD(+) site. Substrate contacts are provided by Q86 and R92. NAD(+) is bound by residues S105, 122-124 (VSN), and S147. A substrate-binding site is contributed by 124 to 127 (NPVD). 152–155 (DTSR) contributes to the substrate binding site. The Proton acceptor role is filled by H179. Position 225 is a phosphotyrosine (Y225). Position 234 (T234) interacts with substrate.

This sequence belongs to the LDH/MDH superfamily. LDH family. In terms of assembly, homotetramer.

Its subcellular location is the cytoplasm. The enzyme catalyses (S)-lactate + NAD(+) = pyruvate + NADH + H(+). The protein operates within fermentation; pyruvate fermentation to lactate; (S)-lactate from pyruvate: step 1/1. Catalyzes the conversion of lactate to pyruvate. The protein is L-lactate dehydrogenase of Clostridium botulinum (strain Okra / Type B1).